Consider the following 549-residue polypeptide: Chaperonin GroEL 1 (549 aa).

ATP contacts are provided by residues 30 to 33 (TLGP), Lys51, 87 to 91 (DGTTT), Gly415, 479 to 481 (NAA), and Asp495.

This sequence belongs to the chaperonin (HSP60) family. In terms of assembly, forms a cylinder of 14 subunits composed of two heptameric rings stacked back-to-back. Interacts with the co-chaperonin GroES.

The protein resides in the cytoplasm. The catalysed reaction is ATP + H2O + a folded polypeptide = ADP + phosphate + an unfolded polypeptide.. Its function is as follows. Together with its co-chaperonin GroES, plays an essential role in assisting protein folding. The GroEL-GroES system forms a nano-cage that allows encapsulation of the non-native substrate proteins and provides a physical environment optimized to promote and accelerate protein folding. This chain is Chaperonin GroEL 1, found in Azoarcus sp. (strain BH72).